The chain runs to 978 residues: MGFNPQGQGNGPNYDAPREMQDLPAGQAYHFRESDETAAARVSPVSNPYEPDYDQLSPPPPLGAQRPVPEQNESSRDLLHSSYQGSVGHNSFDGHSFGHNSYGPGAFGHYPADQHGRMPGSPGYEYPEPEYDVEASRLAESRLSVMHRAPTMQDWGQNGEALSVPDFAHGRPDSTYQEFDVDESWMMRQQQNQLAGGLGRSKTRKVKLVQGSVLSIDYPVPSAIKNAVEPRYRSGPGSMEEEFTKMRYTAATCDPNDFTLRNGFNLRPKMYNRHTELLIAITYYNEDKVLLARTLHGTMQNIRDIVNLKRSKFWNKGGPAWQKIVVCLVFDGIDKVDKNVFDVLATVGIYQDGVLKKDVNGKETVAHIFEYTSQVSVTPDQQLVRPDPDKPHRNLPPVQFIFCLKQKNSKKINSHRWLFNAFGRILNPEVAILIDAGTKPGPRALLSLWEGFYNDRDLGGACGEIHVMLGKGGKMLLNPLVAVQNFEYKISNVLDKPLESAFGYVSVLPGAFSAYRFRAIMGRPLEQYFHGDHTLSKSLGKKGIDGMNIFKKNMFLAEDRILCFELVAKASQKWHLSYIKASKGETDVPEGAAEFIGQRRRWLNGSFAMSLYSLMHFGRMYGSGHNLIRLFFLHIQFVYNLVNVLFSWFSLAAFYLTTTIIMKLVGTPQVLSEYHGWPFGDTATPIVNVLIKYIYIAFLVLQFVLALGNRPKGAQYTYVLSFMVFGLIQLYLLVLTGYLVYRAFTGTPIEEQISFESGKAFFDSFFGGDTGVAGLIIIALFTIYGLNYIASFLYLDPWHMFHSFPQYLVLMSTYINILMVYAFNNWHDVSWGTKGSDTAEALPSAMIVKDEKGKEAVVEEIEQEQEDIDSKFEKVVWRALAPMSEMAEEKPEKKDVEDSYKSFRTGLVILWLLCNIVLIVVVTTDDFITLGVSKAADVRTPTYFRVLLYSTAVLSIVRFFGFLWFIGRTGIMCCIARR.

The segment covering 1-13 (MGFNPQGQGNGPN) has biased composition (low complexity). Disordered regions lie at residues 1-95 (MGFN…FDGH) and 108-127 (GHYPADQHGRMPGSPGYEYP). An N-linked (GlcNAc...) asparagine glycan is attached at Asn72. A glycan (N-linked (GlcNAc...) asparagine) is linked at Asn604. A run of 7 helical transmembrane segments spans residues 641 to 661 (LVNVLFSWFSLAAFYLTTTII), 686 to 706 (IVNVLIKYIYIAFLVLQFVLA), 719 to 739 (VLSFMVFGLIQLYLLVLTGYL), 775 to 795 (LIIIALFTIYGLNYIASFLYL), 803 to 823 (SFPQYLVLMSTYINILMVYAF), 908 to 928 (VILWLLCNIVLIVVVTTDDFI), and 946 to 966 (VLLYSTAVLSIVRFFGFLWFI).

The protein belongs to the chitin synthase family. Class III subfamily.

It localises to the cell membrane. It catalyses the reaction [(1-&gt;4)-N-acetyl-beta-D-glucosaminyl](n) + UDP-N-acetyl-alpha-D-glucosamine = [(1-&gt;4)-N-acetyl-beta-D-glucosaminyl](n+1) + UDP + H(+). Polymerizes chitin, a structural polymer of the cell wall and septum, by transferring the sugar moiety of UDP-GlcNAc to the non-reducing end of the growing chitin polymer. Is essential for viability. This Fusarium oxysporum f. sp. lycopersici (strain 4287 / CBS 123668 / FGSC 9935 / NRRL 34936) (Fusarium vascular wilt of tomato) protein is Chitin synthase 3.